The sequence spans 264 residues: Iodotyrosine deiodinase (264 aa).

FMN is bound by residues 75–79 (RRTVR) and 103–104 (SG). 4 residues coordinate 3-iodo-L-tyrosine: Ala105, Glu132, Tyr136, and Lys157. Residues 212–214 (TST) and Arg254 each bind FMN.

It belongs to the nitroreductase family. Requires FMN as cofactor.

It catalyses the reaction 2 iodide + L-tyrosine + 2 NADP(+) = 3,5-diiodo-L-tyrosine + 2 NADPH + H(+). It carries out the reaction iodide + L-tyrosine + NADP(+) = 3-iodo-L-tyrosine + NADPH. The catalysed reaction is 3-iodo-L-tyrosine + iodide + NADP(+) = 3,5-diiodo-L-tyrosine + NADPH + H(+). The enzyme catalyses L-tyrosine + chloride + NADP(+) = 3-chloro-L-tyrosine + NADPH. It catalyses the reaction bromide + L-tyrosine + NADP(+) = 3-bromo-L-tyrosine + NADPH. In terms of biological role, catalyzes the dehalogenation of halotyrosines such as 3,5-diiodo-L-tyrosine. Likely to also catalyze the dehalogenation of other halotyrosines such as 3-bromo-L-tyrosine, 3-chloro-L-tyrosine and 3-iodo-L-tyrosine. The sequence is that of Iodotyrosine deiodinase from Nematostella vectensis (Starlet sea anemone).